A 306-amino-acid polypeptide reads, in one-letter code: Recombination-associated protein RdgC (306 aa).

The protein belongs to the RdgC family.

It is found in the cytoplasm. The protein resides in the nucleoid. In terms of biological role, may be involved in recombination. This chain is Recombination-associated protein RdgC, found in Pseudomonas putida (strain ATCC 47054 / DSM 6125 / CFBP 8728 / NCIMB 11950 / KT2440).